We begin with the raw amino-acid sequence, 330 residues long: Apolipoprotein E (330 aa).

A signal peptide spans 1–18; it reads MKVLWAALVVALLAGCWA. The segment at 21 to 43 is disordered; sequence EPESPLQGKPEPELEPELEPKRE. Repeat copies occupy residues 96–117, 118–139, 140–161, 162–183, 184–205, 206–227, and 247–268. Residues 96–268 form a 7 X 22 AA approximate tandem repeats region; the sequence is TLMEETMKEI…HLDEVREQME (173 aa). At M159 the chain carries Methionine sulfoxide. S163 bears the Phosphoserine mark. Residues 174-184 are LDL and other lipoprotein receptors binding; the sequence is HMRKLRKRVLR. Position 178–181 (178–181) interacts with heparin; it reads LRKR. The interval 226–303 is lipid-binding and lipoprotein association; sequence HANLATQPLR…SWFEPLVEDM (78 aa). 242-249 contacts heparin; sequence GQQLRGRL. The interval 279–330 is homooligomerization; sequence NQMRQQVEAFQARLKSWFEPLVEDMQRQWAGLVEKVQVAVGTSPTTPPLETK. The tract at residues 291–303 is specificity for association with VLDL; that stretch reads RLKSWFEPLVEDM.

This sequence belongs to the apolipoprotein A1/A4/E family. As to quaternary structure, homotetramer. May interact with ABCA1; functionally associated with ABCA1 in the biogenesis of HDLs. May interact with APP/A4 amyloid-beta peptide; the interaction is extremely stable in vitro but its physiological significance is unclear. May interact with MAPT. May interact with MAP2. In the cerebrospinal fluid, interacts with secreted SORL1. Interacts with PMEL; this allows the loading of PMEL luminal fragment on ILVs to induce fibril nucleation. APOE exists as multiple glycosylated and sialylated glycoforms within cells and in plasma. The extent of glycosylation and sialylation are tissue and context specific. In terms of processing, glycated in plasma VLDL. Post-translationally, phosphorylated by FAM20C in the extracellular medium.

The protein localises to the secreted. It is found in the extracellular space. The protein resides in the extracellular matrix. It localises to the extracellular vesicle. Its subcellular location is the endosome. The protein localises to the multivesicular body. Its function is as follows. APOE is an apolipoprotein, a protein associating with lipid particles, that mainly functions in lipoprotein-mediated lipid transport between organs via the plasma and interstitial fluids. APOE is a core component of plasma lipoproteins and is involved in their production, conversion and clearance. Apolipoproteins are amphipathic molecules that interact both with lipids of the lipoprotein particle core and the aqueous environment of the plasma. As such, APOE associates with chylomicrons, chylomicron remnants, very low density lipoproteins (VLDL) and intermediate density lipoproteins (IDL) but shows a preferential binding to high-density lipoproteins (HDL). It also binds a wide range of cellular receptors including the LDL receptor/LDLR, the LDL receptor-related proteins LRP1, LRP2 and LRP8 and the very low-density lipoprotein receptor/VLDLR that mediate the cellular uptake of the APOE-containing lipoprotein particles. Finally, APOE also has a heparin-binding activity and binds heparan-sulfate proteoglycans on the surface of cells, a property that supports the capture and the receptor-mediated uptake of APOE-containing lipoproteins by cells. A main function of APOE is to mediate lipoprotein clearance through the uptake of chylomicrons, VLDLs, and HDLs by hepatocytes. APOE is also involved in the biosynthesis by the liver of VLDLs as well as their uptake by peripheral tissues ensuring the delivery of triglycerides and energy storage in muscle, heart and adipose tissues. By participating in the lipoprotein-mediated distribution of lipids among tissues, APOE plays a critical role in plasma and tissues lipid homeostasis. APOE is also involved in two steps of reverse cholesterol transport, the HDLs-mediated transport of cholesterol from peripheral tissues to the liver, and thereby plays an important role in cholesterol homeostasis. First, it is functionally associated with ABCA1 in the biogenesis of HDLs in tissues. Second, it is enriched in circulating HDLs and mediates their uptake by hepatocytes. APOE also plays an important role in lipid transport in the central nervous system, regulating neuron survival and sprouting. This Neomonachus schauinslandi (Hawaiian monk seal) protein is Apolipoprotein E (APOE).